The primary structure comprises 460 residues: Interleukin-1 receptor-associated kinase 4 (460 aa).

Residue Met1 is modified to N-acetylmethionine. The 85-residue stretch at 20–104 (RKLSDFIDPQ…APASLLLPDA (85 aa)) folds into the Death domain. Lys34 bears the N6-acetyllysine mark. Positions 186 to 454 (SVGGNKMGEG…PDIKKVQQLL (269 aa)) constitute a Protein kinase domain. Residues 192 to 200 (MGEGGFGVV) and Lys213 contribute to the ATP site. Asp311 serves as the catalytic Proton acceptor. Residues 313–316 (KSAN) and Asp329 contribute to the ATP site. Residues Thr342 and Thr345 each carry the phosphothreonine modification. Ser346 is modified (phosphoserine).

This sequence belongs to the protein kinase superfamily. TKL Ser/Thr protein kinase family. Pelle subfamily. Associates with MYD88 and IRAK2 to form a ternary complex called the Myddosome. Once phosphorylated, IRAK4 dissociates from the receptor complex and then associates with the TNF receptor-associated factor 6 (TRAF6), IRAK1, and PELI1; this intermediate complex is required for subsequent NF-kappa-B activation. Direct binding of SMAD6 to PELI1 prevents complex formation and hence negatively regulates IL1R-TLR signaling and eventually NF-kappa-B-mediated gene expression. Interacts with IL1RL1. Interacts (when phosphorylated) with IRAK1. May interact (when phosphorylated) with IRAK3. Mg(2+) is required as a cofactor. Post-translationally, phosphorylated.

The protein resides in the cytoplasm. It catalyses the reaction L-seryl-[protein] + ATP = O-phospho-L-seryl-[protein] + ADP + H(+). It carries out the reaction L-threonyl-[protein] + ATP = O-phospho-L-threonyl-[protein] + ADP + H(+). Functionally, serine/threonine-protein kinase that plays a critical role in initiating innate immune response against foreign pathogens. Involved in Toll-like receptor (TLR) and IL-1R signaling pathways. Is rapidly recruited by MYD88 to the receptor-signaling complex upon TLR activation to form the Myddosome together with IRAK2. Phosphorylates initially IRAK1, thus stimulating the kinase activity and intensive autophosphorylation of IRAK1. Phosphorylates E3 ubiquitin ligases Pellino proteins (PELI1, PELI2 and PELI3) to promote pellino-mediated polyubiquitination of IRAK1. Then, the ubiquitin-binding domain of IKBKG/NEMO binds to polyubiquitinated IRAK1 bringing together the IRAK1-MAP3K7/TAK1-TRAF6 complex and the NEMO-IKKA-IKKB complex. In turn, MAP3K7/TAK1 activates IKKs (CHUK/IKKA and IKBKB/IKKB) leading to NF-kappa-B nuclear translocation and activation. Alternatively, phosphorylates TIRAP to promote its ubiquitination and subsequent degradation. Phosphorylates NCF1 and regulates NADPH oxidase activation after LPS stimulation suggesting a similar mechanism during microbial infections. This Homo sapiens (Human) protein is Interleukin-1 receptor-associated kinase 4 (IRAK4).